Here is a 978-residue protein sequence, read N- to C-terminus: Probable serine/threonine-protein kinase PLK (978 aa).

Residues 19-36 (IQIQQQQFKQPQQQPQQK) show a composition bias toward low complexity. Disordered regions lie at residues 19-66 (IQIQ…SSIH) and 121-143 (QQQQ…NEPQ). The span at 37-53 (SNSCFSDQENYPANIQP) shows a compositional bias: polar residues. Over residues 54–64 (SSSTSSSSSSS) the composition is skewed to low complexity. The region spanning 163 to 416 (YRQGEFLGKG…LTQILEHDFF (254 aa)) is the Protein kinase domain. ATP-binding positions include 169 to 177 (LGKGGFAKC) and lysine 192. The active-site Proton acceptor is aspartate 286. Disordered stretches follow at residues 463 to 554 (GTTS…FANL) and 601 to 638 (ENQQ…TVTT). 2 stretches are compositionally biased toward low complexity: residues 473-492 (HHYQ…NYQQ) and 500-549 (INNM…NINN). Coiled coils occupy residues 497–555 (KKQI…ANLS) and 592–630 (IKQQ…INNN). In terms of domain architecture, POLO box 1 spans 696 to 780 (YISQYADFTN…IKYFLNHFTN (85 aa)). The disordered stretch occupies residues 798–819 (NNNNNNNVENVTNNNNNNSNNS). The region spanning 826 to 904 (YVKKWIKFDN…IYGTLSNNLY (79 aa)) is the POLO box 2 domain. The segment at 908–978 (PESSFQQLPQ…SIPQPQLINQ (71 aa)) is disordered. The span at 913-978 (QQLPQQQYQQ…SIPQPQLINQ (66 aa)) shows a compositional bias: low complexity.

This sequence belongs to the protein kinase superfamily. Ser/Thr protein kinase family. CDC5/Polo subfamily.

It carries out the reaction L-seryl-[protein] + ATP = O-phospho-L-seryl-[protein] + ADP + H(+). The catalysed reaction is L-threonyl-[protein] + ATP = O-phospho-L-threonyl-[protein] + ADP + H(+). The protein is Probable serine/threonine-protein kinase PLK (PLK) of Dictyostelium discoideum (Social amoeba).